The following is a 255-amino-acid chain: tRNA (guanine-N(1)-)-methyltransferase (255 aa).

S-adenosyl-L-methionine-binding positions include Gly-113 and 133 to 138 (IGDYVL).

Belongs to the RNA methyltransferase TrmD family. In terms of assembly, homodimer.

It localises to the cytoplasm. The catalysed reaction is guanosine(37) in tRNA + S-adenosyl-L-methionine = N(1)-methylguanosine(37) in tRNA + S-adenosyl-L-homocysteine + H(+). Specifically methylates guanosine-37 in various tRNAs. This is tRNA (guanine-N(1)-)-methyltransferase from Serratia proteamaculans (strain 568).